The chain runs to 124 residues: NADPH-dependent 7-cyano-7-deazaguanine reductase (124 aa).

The Thioimide intermediate role is filled by cysteine 40. The active-site Proton donor is the aspartate 47. Residues 62 to 64 (VEL) and 81 to 82 (HE) each bind substrate.

Belongs to the GTP cyclohydrolase I family. QueF type 1 subfamily.

Its subcellular location is the cytoplasm. The catalysed reaction is 7-aminomethyl-7-carbaguanine + 2 NADP(+) = 7-cyano-7-deazaguanine + 2 NADPH + 3 H(+). The protein operates within tRNA modification; tRNA-queuosine biosynthesis. In terms of biological role, catalyzes the NADPH-dependent reduction of 7-cyano-7-deazaguanine (preQ0) to 7-aminomethyl-7-deazaguanine (preQ1). This chain is NADPH-dependent 7-cyano-7-deazaguanine reductase, found in Wolinella succinogenes (strain ATCC 29543 / DSM 1740 / CCUG 13145 / JCM 31913 / LMG 7466 / NCTC 11488 / FDC 602W) (Vibrio succinogenes).